Reading from the N-terminus, the 354-residue chain is Probable L-ascorbate-6-phosphate lactonase UlaG (354 aa).

This sequence belongs to the UlaG family. The cofactor is a divalent metal cation.

It is found in the cytoplasm. The catalysed reaction is L-ascorbate 6-phosphate + H2O = 3-dehydro-L-gulonate 6-phosphate. It functions in the pathway cofactor degradation; L-ascorbate degradation; D-xylulose 5-phosphate from L-ascorbate: step 1/4. In terms of biological role, probably catalyzes the hydrolysis of L-ascorbate-6-P into 3-keto-L-gulonate-6-P. Is essential for L-ascorbate utilization under anaerobic conditions. The chain is Probable L-ascorbate-6-phosphate lactonase UlaG from Shigella boydii serotype 18 (strain CDC 3083-94 / BS512).